A 158-amino-acid chain; its full sequence is UPF0262 protein Rsph17029_2283 (158 aa).

The protein belongs to the UPF0262 family.

This is UPF0262 protein Rsph17029_2283 from Cereibacter sphaeroides (strain ATCC 17029 / ATH 2.4.9) (Rhodobacter sphaeroides).